The chain runs to 253 residues: Imidazole glycerol phosphate synthase subunit HisF (253 aa).

Active-site residues include D11 and D130.

Belongs to the HisA/HisF family. Heterodimer of HisH and HisF.

The protein resides in the cytoplasm. It catalyses the reaction 5-[(5-phospho-1-deoxy-D-ribulos-1-ylimino)methylamino]-1-(5-phospho-beta-D-ribosyl)imidazole-4-carboxamide + L-glutamine = D-erythro-1-(imidazol-4-yl)glycerol 3-phosphate + 5-amino-1-(5-phospho-beta-D-ribosyl)imidazole-4-carboxamide + L-glutamate + H(+). It functions in the pathway amino-acid biosynthesis; L-histidine biosynthesis; L-histidine from 5-phospho-alpha-D-ribose 1-diphosphate: step 5/9. Functionally, IGPS catalyzes the conversion of PRFAR and glutamine to IGP, AICAR and glutamate. The HisF subunit catalyzes the cyclization activity that produces IGP and AICAR from PRFAR using the ammonia provided by the HisH subunit. This is Imidazole glycerol phosphate synthase subunit HisF from Geotalea uraniireducens (strain Rf4) (Geobacter uraniireducens).